The sequence spans 244 residues: DNA repair protein RecO (244 aa).

Belongs to the RecO family.

In terms of biological role, involved in DNA repair and RecF pathway recombination. The sequence is that of DNA repair protein RecO from Caldicellulosiruptor bescii (strain ATCC BAA-1888 / DSM 6725 / KCTC 15123 / Z-1320) (Anaerocellum thermophilum).